Here is a 399-residue protein sequence, read N- to C-terminus: Forkhead box protein Q1 (399 aa).

Positions 1-112 are disordered; the sequence is MKLEVFAPRA…EGARSKPYTR (112 aa). Positions 32–54 are enriched in low complexity; sequence LSAAGDDSLGSDGDCAANSPAAG. Residues 55–66 are compositionally biased toward gly residues; sequence SGAGDLEGGGGE. The fork-head DNA-binding region spans 114–205; it reads PKPPYSYIAL…SEYTFADGVF (92 aa). The disordered stretch occupies residues 211–263; the sequence is RLSHRTTVSASGYGGGSPPGPAGTPQPAPTAGSSPIARSPARQEEGSSPASKF. Pro residues predominate over residues 228-238; it reads PPGPAGTPQPA.

The protein localises to the nucleus. Plays a role in hair follicle differentiation. In Rattus norvegicus (Rat), this protein is Forkhead box protein Q1 (Foxq1).